The primary structure comprises 94 residues: Co-chaperonin GroES (94 aa).

The protein belongs to the GroES chaperonin family. Heptamer of 7 subunits arranged in a ring. Interacts with the chaperonin GroEL.

It localises to the cytoplasm. Its function is as follows. Together with the chaperonin GroEL, plays an essential role in assisting protein folding. The GroEL-GroES system forms a nano-cage that allows encapsulation of the non-native substrate proteins and provides a physical environment optimized to promote and accelerate protein folding. GroES binds to the apical surface of the GroEL ring, thereby capping the opening of the GroEL channel. This chain is Co-chaperonin GroES, found in Lactococcus lactis subsp. cremoris (strain MG1363).